The chain runs to 456 residues: Methionine aminopeptidase 2 (456 aa).

Over residues 1-11 (MTIPVPKPAHP) the composition is skewed to pro residues. Positions 1–127 (MTIPVPKPAH…SYRTTSSEKR (127 aa)) are disordered. Acidic residues predominate over residues 31 to 45 (EADEEEDDDDEEGKE). The segment covering 66–79 (KKKKKKKKKPKKKK) has biased composition (basic residues). Position 209 (H209) interacts with substrate. The a divalent metal cation site is built by D229, D240, and H309. H317 serves as a coordination point for substrate. The a divalent metal cation site is built by E343 and E437.

This sequence belongs to the peptidase M24A family. Methionine aminopeptidase eukaryotic type 2 subfamily. The cofactor is Co(2+). It depends on Zn(2+) as a cofactor. Mn(2+) is required as a cofactor. Requires Fe(2+) as cofactor.

The protein resides in the cytoplasm. It catalyses the reaction Release of N-terminal amino acids, preferentially methionine, from peptides and arylamides.. Functionally, cotranslationally removes the N-terminal methionine from nascent proteins. The N-terminal methionine is often cleaved when the second residue in the primary sequence is small and uncharged (Met-Ala-, Cys, Gly, Pro, Ser, Thr, or Val). This is Methionine aminopeptidase 2 from Puccinia graminis f. sp. tritici (strain CRL 75-36-700-3 / race SCCL) (Black stem rust fungus).